A 395-amino-acid chain; its full sequence is S-adenosylmethionine synthase (395 aa).

Residue His-16 participates in ATP binding. Asp-18 contributes to the Mg(2+) binding site. Residue Glu-44 coordinates K(+). Glu-57 and Gln-100 together coordinate L-methionine. Positions 100-110 (QSPDIAQGVDR) are flexible loop. ATP-binding positions include 167-169 (DAK), 233-234 (RF), Asp-242, 248-249 (RK), Ala-265, and Lys-269. Asp-242 contacts L-methionine. Lys-273 contributes to the L-methionine binding site.

It belongs to the AdoMet synthase family. Homotetramer; dimer of dimers. Mg(2+) is required as a cofactor. K(+) serves as cofactor.

The protein localises to the cytoplasm. It carries out the reaction L-methionine + ATP + H2O = S-adenosyl-L-methionine + phosphate + diphosphate. It functions in the pathway amino-acid biosynthesis; S-adenosyl-L-methionine biosynthesis; S-adenosyl-L-methionine from L-methionine: step 1/1. Its function is as follows. Catalyzes the formation of S-adenosylmethionine (AdoMet) from methionine and ATP. The overall synthetic reaction is composed of two sequential steps, AdoMet formation and the subsequent tripolyphosphate hydrolysis which occurs prior to release of AdoMet from the enzyme. This is S-adenosylmethionine synthase from Burkholderia mallei (strain NCTC 10247).